A 312-amino-acid polypeptide reads, in one-letter code: Olfactory receptor 6X1 (312 aa).

Residues 1 to 23 (MRNGTVITEFILLGFPVIQGLQT) are Extracellular-facing. N-linked (GlcNAc...) asparagine glycosylation occurs at N3. The chain crosses the membrane as a helical span at residues 24–44 (PLFIAIFLTYILTLAGNGLII). Residues 45 to 52 (ATVWAEPR) lie on the Cytoplasmic side of the membrane. The helical transmembrane segment at 53-73 (LQIPMYFFLCNLSFLEIWYTT) threads the bilayer. The Extracellular portion of the chain corresponds to 74 to 97 (TVIPKLLGTFVVARTVICMSCCLL). C95 and C187 are disulfide-bonded. The helical transmembrane segment at 98-118 (QAFFHFFVGTTEFLILTIMSF) threads the bilayer. Over 119–137 (DRYLTICNPLHHPTIMTSK) the chain is Cytoplasmic. The helical transmembrane segment at 138–158 (LCLQLALSSWVVGFTIVFCQT) threads the bilayer. The Extracellular portion of the chain corresponds to 159 to 195 (MLLIQLPFCGNNVISHFYCDVGPSLKAACIDTSILEL). A helical membrane pass occupies residues 196–215 (LGVIATILVIPGSLLFNMIS). Residues 216 to 235 (YIYILSAILRIPSATGHQKT) are Cytoplasmic-facing. Residues 236-256 (FSTCASHLTVVSLLYGAVLFM) traverse the membrane as a helical segment. Residues 257–269 (YLRPTAHSSFKIN) lie on the Extracellular side of the membrane. A helical transmembrane segment spans residues 270 to 290 (KVVSVLNTILTPLLNPFIYTI). Residues 291-312 (RNKEVKGALRKAMTCPKTGHAK) are Cytoplasmic-facing.

It belongs to the G-protein coupled receptor 1 family.

It localises to the cell membrane. In terms of biological role, odorant receptor. The protein is Olfactory receptor 6X1 (OR6X1) of Homo sapiens (Human).